A 1886-amino-acid chain; its full sequence is Highly reducing polyketide synthase (1886 aa).

A Ketosynthase family 3 (KS3) domain is found at 11–434 (TQDVAIVGLS…GANAHAVLDD (424 aa)). Residues cysteine 182, histidine 317, and histidine 357 each act as for beta-ketoacyl synthase activity in the active site. A malonyl-CoA:ACP transacylase (MAT) domain region spans residues 483-568 (FLFSGQDQQS…VNNDLANTKK (86 aa)). Residues 616–750 (RSLIGAPQPS…GLLSIEYESS (135 aa)) form an N-terminal hotdog fold region. Positions 616–926 (RSLIGAPQPS…CTAISEATNP (311 aa)) constitute a PKS/mFAS DH domain. Residues 618 to 924 (LIGAPQPSYG…LHCTAISEAT (307 aa)) form a dehydratase (DH) domain region. Histidine 648 serves as the catalytic Proton acceptor; for dehydratase activity. Residues 778-926 (HTTQSPKALY…CTAISEATNP (149 aa)) form a C-terminal hotdog fold region. Aspartate 838 acts as the Proton donor; for dehydratase activity in catalysis. An enoylreductase (ER) domain region spans residues 1169 to 1480 (GMLDEIYFEA…AGKHMGKVAL (312 aa)). A catalytic ketoreductase (KRc) domain region spans residues 1503-1681 (ATYVLVGGFG…VSLDLGLMRD (179 aa)). The Carrier domain maps to 1802–1879 (DVTDLVLEIL…DLVDKIVAKS (78 aa)). At serine 1839 the chain carries O-(pantetheine 4'-phosphoryl)serine.

It functions in the pathway mycotoxin biosynthesis. Functionally, highly reducing polyketide synthase; part of the gene cluster that mediates the biosynthesis of the selective antifungal agent ascochitine, an o-quinone methide that plays a possible protective role against other microbial competitors in nature and is considered to be important for pathogenicity of legume-associated Didymella species. The pathway probably begins with the synthesis of a keto-aldehyde intermediate by the ascochitine non-reducing polyketide synthase pksAC from successive condensations of 4 malonyl-CoA units, presumably with a simple acetyl-CoA starter unit. Release of the keto-aldehyde intermediate is consistent with the presence of the C-terminal reductive release domain. The HR-PKS (orf7) probably makes a diketide starter unit which is passed to the non-reducing polyketide synthase pksAC for further extension, producing ascochital and ascochitine. The aldehyde dehydrogenase (orf1), the 2-oxoglutarate-dependent dioxygenase (orf3) and the dehydrogenase (orf9) are probably involved in subsequent oxidations of methyl groups to the carboxylic acid of the heterocyclic ring. The ascochitine gene cluster also includes a gene encoding a short peptide with a cupin domain (orf2) that is often found in secondary metabolite gene clusters and which function has still to be determined. The sequence is that of Highly reducing polyketide synthase from Didymella fabae (Leaf and pod spot disease fungus).